The primary structure comprises 207 residues: Outer-membrane lipoprotein LolB (207 aa).

Positions 1 to 21 (MPLPDFRLIRLLPLAALVLTA) are cleaved as a signal peptide. Cys22 carries N-palmitoyl cysteine lipidation. The S-diacylglycerol cysteine moiety is linked to residue Cys22.

The protein belongs to the LolB family. As to quaternary structure, monomer.

It localises to the cell outer membrane. Functionally, plays a critical role in the incorporation of lipoproteins in the outer membrane after they are released by the LolA protein. This Escherichia coli (strain K12 / MC4100 / BW2952) protein is Outer-membrane lipoprotein LolB.